The chain runs to 211 residues: Urease accessory protein UreG (211 aa).

13 to 20 contributes to the GTP binding site; that stretch reads GPVGSGKT.

Belongs to the SIMIBI class G3E GTPase family. UreG subfamily. In terms of assembly, homodimer. UreD, UreF and UreG form a complex that acts as a GTP-hydrolysis-dependent molecular chaperone, activating the urease apoprotein by helping to assemble the nickel containing metallocenter of UreC. The UreE protein probably delivers the nickel.

It is found in the cytoplasm. In terms of biological role, facilitates the functional incorporation of the urease nickel metallocenter. This process requires GTP hydrolysis, probably effectuated by UreG. This is Urease accessory protein UreG from Alkalilimnicola ehrlichii (strain ATCC BAA-1101 / DSM 17681 / MLHE-1).